The chain runs to 126 residues: uncharacterized protein (126 aa).

An HTH hxlR-type domain is found at 8 to 106 (ISVEATLEVI…WGANHINRVY (99 aa)).

This is an uncharacterized protein from Bacillus subtilis (strain 168).